The primary structure comprises 434 residues: Meiosis-specific kinetochore protein (434 aa).

2 disordered regions span residues 1–102 and 249–289; these read MDKI…PCET and VFAE…PDNK. Residues 46–62 show a composition bias toward basic and acidic residues; the sequence is KGKEQGLRKITEKKELS. A compositionally biased stretch (polar residues) spans 64 to 76; sequence LTGSSSQRPSLLS. A POLO box domain (PBD)-binding motif is present at residues 334-336; that stretch reads STP. A required for localization to kinetochores region spans residues 391-394; the sequence is EICC. The interval 404–424 is disordered; sequence QMRRKDPAVKNRCSPPKDVPL.

Interacts with CENPC. Interacts with PLK1; required for recruitment of PLK1 at kinetochores. In terms of tissue distribution, germ cell-specific. Expressed in both testis and ovary. Not expressed in other tissues.

It localises to the chromosome. It is found in the centromere. The protein localises to the kinetochore. Key regulator of kinetochore function during meiosis I: required both for mono-orientation of kinetochores on sister chromosomes and protection of centromeric cohesin from separase-mediated cleavage. Acts by facilitating kinetochore mono-orientation during meiosis I, when kinetochores on sister chromosomes face the same direction and are thus captured and pulled by spindle fibers from the same pole. Also required to prevent cleavage of cohesin at centromeres during meiosis I, possibly by acting as a regulator of the shugoshin-dependent protection pathway. Acts in collaboration with PLK1: required for PLK1 enrichment to kinetochores. Not required during meiosis II or mitosis. The chain is Meiosis-specific kinetochore protein from Mus musculus (Mouse).